Consider the following 932-residue polypeptide: Isoleucine--tRNA ligase (932 aa).

Positions 57–67 (PYANGDIHIGT) match the 'HIGH' region motif. Position 559 (Glu559) interacts with L-isoleucyl-5'-AMP. A 'KMSKS' region motif is present at residues 600 to 604 (KMSKS). Position 603 (Lys603) interacts with ATP. Zn(2+)-binding residues include Cys899, Cys902, Cys919, and Cys922.

The protein belongs to the class-I aminoacyl-tRNA synthetase family. IleS type 1 subfamily. As to quaternary structure, monomer. Zn(2+) is required as a cofactor.

It is found in the cytoplasm. It catalyses the reaction tRNA(Ile) + L-isoleucine + ATP = L-isoleucyl-tRNA(Ile) + AMP + diphosphate. Functionally, catalyzes the attachment of isoleucine to tRNA(Ile). As IleRS can inadvertently accommodate and process structurally similar amino acids such as valine, to avoid such errors it has two additional distinct tRNA(Ile)-dependent editing activities. One activity is designated as 'pretransfer' editing and involves the hydrolysis of activated Val-AMP. The other activity is designated 'posttransfer' editing and involves deacylation of mischarged Val-tRNA(Ile). The protein is Isoleucine--tRNA ligase of Caldanaerobacter subterraneus subsp. tengcongensis (strain DSM 15242 / JCM 11007 / NBRC 100824 / MB4) (Thermoanaerobacter tengcongensis).